We begin with the raw amino-acid sequence, 275 residues long: Arylamine N-acetyltransferase (275 aa).

The active-site Acyl-thioester intermediate is cysteine 70. Residues histidine 110 and aspartate 127 contribute to the active site.

Belongs to the arylamine N-acetyltransferase family. In terms of assembly, homodimer and homotetramer.

The enzyme catalyses an arylamine + acetyl-CoA = an N-acetylarylamine + CoA. Catalyzes the transfer of the acetyl group from acetyl coenzyme A to the free amino group of arylamines and hydrazines. Substrates include isoniazid, anisidine, and 4-aminoveratrole, and to a much lesser extent, p-aminobenzoic acid. The protein is Arylamine N-acetyltransferase of Mycolicibacterium smegmatis (Mycobacterium smegmatis).